Consider the following 355-residue polypeptide: Mu-like prophage FluMu I protein (355 aa).

This sequence belongs to the peptidase U35 family.

Its function is as follows. Potential protease involved in virion morphogenesis. The chain is Mu-like prophage FluMu I protein from Haemophilus influenzae (strain ATCC 51907 / DSM 11121 / KW20 / Rd).